We begin with the raw amino-acid sequence, 444 residues long: Nuclear envelope integral membrane protein 1 (444 aa).

An N-terminal signal peptide occupies residues 1–43; that stretch reads MAGGMKVAVSPAVGPGPWGSGVGGGGTVRLLLILSGCLVYGTA. N125 is a glycosylation site (N-linked (GlcNAc...) asparagine). Helical transmembrane passes span 161–181, 186–206, 216–236, 245–265, and 289–309; these read PKLFLVFLLGLMLFFCGDLLS, FYYSTGMTVGIVASLLIIIFI, PIYVILVGGWSFSLYLIQLVF, CYWQYLLSYVLTVGFMSFAVC, and LCFMYSGIQIPHIALAIIIIA. The a; required for its colocalization with lamins at the nuclear envelope stretch occupies residues 186-297; the sequence is FYYSTGMTVG…GLCFMYSGIQ (112 aa). The segment at 336-405 is b; required for interaction with RAN-GTP; it reads PVPPRLLTEE…LTPNEVSVHE (70 aa). Residues 336–444 are required for nuclear localization; sequence PVPPRLLTEE…PAITQNNFLT (109 aa). A phosphoserine mark is found at S368, S424, and S425.

The protein belongs to the NEMP family. In terms of assembly, homooligomer. Interacts with RAN-GTP. Interacts with EMD. Phosphorylation may regulate its interaction with RAN-GTP.

It is found in the nucleus inner membrane. The protein resides in the nucleus envelope. In terms of biological role, together with EMD, contributes to nuclear envelope stiffness in germ cells. Required for female fertility. Essential for normal erythropoiesis. Required for efficient nuclear envelope opening and enucleation during the late stages of erythroblast maturation. The chain is Nuclear envelope integral membrane protein 1 (NEMP1) from Homo sapiens (Human).